A 410-amino-acid chain; its full sequence is Gamma-glutamyl phosphate reductase (410 aa).

The protein belongs to the gamma-glutamyl phosphate reductase family.

It localises to the cytoplasm. The enzyme catalyses L-glutamate 5-semialdehyde + phosphate + NADP(+) = L-glutamyl 5-phosphate + NADPH + H(+). Its pathway is amino-acid biosynthesis; L-proline biosynthesis; L-glutamate 5-semialdehyde from L-glutamate: step 2/2. Functionally, catalyzes the NADPH-dependent reduction of L-glutamate 5-phosphate into L-glutamate 5-semialdehyde and phosphate. The product spontaneously undergoes cyclization to form 1-pyrroline-5-carboxylate. This chain is Gamma-glutamyl phosphate reductase, found in Campylobacter jejuni subsp. jejuni serotype O:2 (strain ATCC 700819 / NCTC 11168).